A 370-amino-acid polypeptide reads, in one-letter code: UDP-N-acetylglucosamine--N-acetylmuramyl-(pentapeptide) pyrophosphoryl-undecaprenol N-acetylglucosamine transferase (370 aa).

UDP-N-acetyl-alpha-D-glucosamine is bound by residues 15 to 17 (TGG), asparagine 126, arginine 169, serine 197, and glutamine 299.

It belongs to the glycosyltransferase 28 family. MurG subfamily.

The protein localises to the cell inner membrane. The enzyme catalyses di-trans,octa-cis-undecaprenyl diphospho-N-acetyl-alpha-D-muramoyl-L-alanyl-D-glutamyl-meso-2,6-diaminopimeloyl-D-alanyl-D-alanine + UDP-N-acetyl-alpha-D-glucosamine = di-trans,octa-cis-undecaprenyl diphospho-[N-acetyl-alpha-D-glucosaminyl-(1-&gt;4)]-N-acetyl-alpha-D-muramoyl-L-alanyl-D-glutamyl-meso-2,6-diaminopimeloyl-D-alanyl-D-alanine + UDP + H(+). It functions in the pathway cell wall biogenesis; peptidoglycan biosynthesis. Functionally, cell wall formation. Catalyzes the transfer of a GlcNAc subunit on undecaprenyl-pyrophosphoryl-MurNAc-pentapeptide (lipid intermediate I) to form undecaprenyl-pyrophosphoryl-MurNAc-(pentapeptide)GlcNAc (lipid intermediate II). This is UDP-N-acetylglucosamine--N-acetylmuramyl-(pentapeptide) pyrophosphoryl-undecaprenol N-acetylglucosamine transferase from Methylorubrum populi (strain ATCC BAA-705 / NCIMB 13946 / BJ001) (Methylobacterium populi).